Here is a 372-residue protein sequence, read N- to C-terminus: Glutamate 5-kinase (372 aa).

K14 is an ATP binding site. 3 residues coordinate substrate: S54, D141, and N153. 173 to 174 provides a ligand contact to ATP; sequence TD. One can recognise a PUA domain in the interval 280–358; that stretch reads RGTLVLDEGA…DAIVGVLGYM (79 aa).

The protein belongs to the glutamate 5-kinase family.

The protein resides in the cytoplasm. The enzyme catalyses L-glutamate + ATP = L-glutamyl 5-phosphate + ADP. Its pathway is amino-acid biosynthesis; L-proline biosynthesis; L-glutamate 5-semialdehyde from L-glutamate: step 1/2. Its function is as follows. Catalyzes the transfer of a phosphate group to glutamate to form L-glutamate 5-phosphate. This Pseudomonas fluorescens (strain ATCC BAA-477 / NRRL B-23932 / Pf-5) protein is Glutamate 5-kinase.